The chain runs to 355 residues: Uroporphyrinogen decarboxylase (355 aa).

Residues 27-31 (RQAGR), D78, Y155, T210, and H328 contribute to the substrate site.

Belongs to the uroporphyrinogen decarboxylase family. Homodimer.

The protein localises to the cytoplasm. It catalyses the reaction uroporphyrinogen III + 4 H(+) = coproporphyrinogen III + 4 CO2. It participates in porphyrin-containing compound metabolism; protoporphyrin-IX biosynthesis; coproporphyrinogen-III from 5-aminolevulinate: step 4/4. Its function is as follows. Catalyzes the decarboxylation of four acetate groups of uroporphyrinogen-III to yield coproporphyrinogen-III. In Pseudomonas fluorescens (strain Pf0-1), this protein is Uroporphyrinogen decarboxylase.